The following is a 398-amino-acid chain: Aurofusarin biosynthesis regulatory protein aurR1 (398 aa).

The zn(2)-C6 fungal-type DNA-binding region spans Cys-18–Cys-45. Disordered stretches follow at residues Arg-52–Pro-73 and Ala-275–Ile-314. Composition is skewed to basic and acidic residues over residues Arg-56–Gln-67 and Asp-289–Ser-298. Residues Arg-299–Ser-311 show a composition bias toward polar residues.

It localises to the nucleus. Functionally, transcription factor that specifically regulates the expression of the gene cluster that mediates the biosynthesis of aurofusarin, a red mycelium pigment which is acting as a mycotoxin. This Gibberella zeae (strain ATCC MYA-4620 / CBS 123657 / FGSC 9075 / NRRL 31084 / PH-1) (Wheat head blight fungus) protein is Aurofusarin biosynthesis regulatory protein aurR1.